Reading from the N-terminus, the 447-residue chain is Argininosuccinate synthase (447 aa).

ATP-binding positions include 17-25 (AFSGGLDTS) and Ala43. Tyr99 serves as a coordination point for L-citrulline. Residues Gly129 and Thr131 each contribute to the ATP site. Thr131, Asn135, and Asp136 together coordinate L-aspartate. Asn135 contacts L-citrulline. An ATP-binding site is contributed by Asp136. Arg139 and Ser192 together coordinate L-citrulline. Asp194 contributes to the ATP binding site. L-citrulline-binding residues include Thr201, Glu203, and Glu280.

Belongs to the argininosuccinate synthase family. Type 2 subfamily. As to quaternary structure, homotetramer.

The protein resides in the cytoplasm. The enzyme catalyses L-citrulline + L-aspartate + ATP = 2-(N(omega)-L-arginino)succinate + AMP + diphosphate + H(+). Its pathway is amino-acid biosynthesis; L-arginine biosynthesis; L-arginine from L-ornithine and carbamoyl phosphate: step 2/3. This Escherichia coli O127:H6 (strain E2348/69 / EPEC) protein is Argininosuccinate synthase.